The following is a 327-amino-acid chain: Short chain isoprenyl diphosphate synthase (327 aa).

Isopentenyl diphosphate is bound by residues Lys48, Arg51, and His80. Asp87 and Asp91 together coordinate Mg(2+). Arg96 provides a ligand contact to an all-trans-polyprenyl diphosphate. Residue Arg97 participates in isopentenyl diphosphate binding. An all-trans-polyprenyl diphosphate is bound by residues Lys176, Thr177, Gln214, Lys231, and Lys241.

Belongs to the FPP/GGPP synthase family. In terms of assembly, homodimer. Requires Mg(2+) as cofactor.

Its subcellular location is the cytoplasm. The sequence is that of Short chain isoprenyl diphosphate synthase (idsA) from Methanocaldococcus jannaschii (strain ATCC 43067 / DSM 2661 / JAL-1 / JCM 10045 / NBRC 100440) (Methanococcus jannaschii).